The sequence spans 380 residues: Cytochrome b (380 aa).

The next 4 helical transmembrane spans lie at 34–54 (FGSL…LLAM), 78–99 (WLIR…YLHI), 114–134 (WNTG…GYVL), and 179–199 (FFAL…IHLT). Heme b-binding residues include H84 and H98. Residues H183 and H197 each contribute to the heme b site. H202 contributes to the a ubiquinone binding site. 4 consecutive transmembrane segments (helical) span residues 227-247 (LKDA…ALFS), 289-309 (LGGV…PLLH), 321-341 (LSQL…WVGS), and 348-368 (FIII…ILFP).

Belongs to the cytochrome b family. In terms of assembly, the cytochrome bc1 complex contains 11 subunits: 3 respiratory subunits (MT-CYB, CYC1 and UQCRFS1), 2 core proteins (UQCRC1 and UQCRC2) and 6 low-molecular weight proteins (UQCRH/QCR6, UQCRB/QCR7, UQCRQ/QCR8, UQCR10/QCR9, UQCR11/QCR10 and a cleavage product of UQCRFS1). This cytochrome bc1 complex then forms a dimer. It depends on heme b as a cofactor.

It localises to the mitochondrion inner membrane. Component of the ubiquinol-cytochrome c reductase complex (complex III or cytochrome b-c1 complex) that is part of the mitochondrial respiratory chain. The b-c1 complex mediates electron transfer from ubiquinol to cytochrome c. Contributes to the generation of a proton gradient across the mitochondrial membrane that is then used for ATP synthesis. The sequence is that of Cytochrome b (MT-CYB) from Oceanites oceanicus (Wilson's storm petrel).